The primary structure comprises 314 residues: Methionyl-tRNA formyltransferase (314 aa).

Position 113 to 116 (S113 to P116) interacts with (6S)-5,6,7,8-tetrahydrofolate.

This sequence belongs to the Fmt family.

The catalysed reaction is L-methionyl-tRNA(fMet) + (6R)-10-formyltetrahydrofolate = N-formyl-L-methionyl-tRNA(fMet) + (6S)-5,6,7,8-tetrahydrofolate + H(+). Its function is as follows. Attaches a formyl group to the free amino group of methionyl-tRNA(fMet). The formyl group appears to play a dual role in the initiator identity of N-formylmethionyl-tRNA by promoting its recognition by IF2 and preventing the misappropriation of this tRNA by the elongation apparatus. In Chlorobaculum tepidum (strain ATCC 49652 / DSM 12025 / NBRC 103806 / TLS) (Chlorobium tepidum), this protein is Methionyl-tRNA formyltransferase.